The sequence spans 197 residues: Xanthine phosphoribosyltransferase (197 aa).

2 residues coordinate xanthine: Leu20 and Asn27. 128-132 lines the 5-phospho-alpha-D-ribose 1-diphosphate pocket; the sequence is ANGQA. Lys156 serves as a coordination point for xanthine.

This sequence belongs to the purine/pyrimidine phosphoribosyltransferase family. Xpt subfamily. In terms of assembly, homodimer.

The protein localises to the cytoplasm. It catalyses the reaction XMP + diphosphate = xanthine + 5-phospho-alpha-D-ribose 1-diphosphate. It participates in purine metabolism; XMP biosynthesis via salvage pathway; XMP from xanthine: step 1/1. In terms of biological role, converts the preformed base xanthine, a product of nucleic acid breakdown, to xanthosine 5'-monophosphate (XMP), so it can be reused for RNA or DNA synthesis. In Bacillus cereus (strain ZK / E33L), this protein is Xanthine phosphoribosyltransferase.